We begin with the raw amino-acid sequence, 183 residues long: ATP-dependent protease subunit HslV (183 aa).

Threonine 13 is an active-site residue. Residues glycine 168, cysteine 171, and threonine 174 each coordinate Na(+).

Belongs to the peptidase T1B family. HslV subfamily. A double ring-shaped homohexamer of HslV is capped on each side by a ring-shaped HslU homohexamer. The assembly of the HslU/HslV complex is dependent on binding of ATP.

It localises to the cytoplasm. It catalyses the reaction ATP-dependent cleavage of peptide bonds with broad specificity.. Allosterically activated by HslU binding. In terms of biological role, protease subunit of a proteasome-like degradation complex believed to be a general protein degrading machinery. In Xylella fastidiosa (strain M23), this protein is ATP-dependent protease subunit HslV.